Consider the following 338-residue polypeptide: Tetraacyldisaccharide 4'-kinase (338 aa).

63–70 contacts ATP; the sequence is TVGGAGKT.

The protein belongs to the LpxK family.

It carries out the reaction a lipid A disaccharide + ATP = a lipid IVA + ADP + H(+). The protein operates within glycolipid biosynthesis; lipid IV(A) biosynthesis; lipid IV(A) from (3R)-3-hydroxytetradecanoyl-[acyl-carrier-protein] and UDP-N-acetyl-alpha-D-glucosamine: step 6/6. In terms of biological role, transfers the gamma-phosphate of ATP to the 4'-position of a tetraacyldisaccharide 1-phosphate intermediate (termed DS-1-P) to form tetraacyldisaccharide 1,4'-bis-phosphate (lipid IVA). The polypeptide is Tetraacyldisaccharide 4'-kinase (Hahella chejuensis (strain KCTC 2396)).